The following is a 576-amino-acid chain: Lipoprotein LpqB (576 aa).

Residues 1-16 (MRRVTRTIAAAGAAIA) form the signal peptide. Residue Cys17 is the site of N-palmitoyl cysteine attachment. Residue Cys17 is the site of S-diacylglycerol cysteine attachment.

This sequence belongs to the LpqB lipoprotein family.

It localises to the cell membrane. This chain is Lipoprotein LpqB, found in Bifidobacterium longum (strain NCC 2705).